The sequence spans 902 residues: Tiger protein B1 (902 aa).

The signal sequence occupies residues 1-24 (MKVIYIYLLLLLVCKFLFVKSSCS). Over 25 to 803 (LKVGKIECTK…IIYSENKSTG (779 aa)) the chain is Extracellular. Asn-43, Asn-144, Asn-184, Asn-223, Asn-272, Asn-279, Asn-288, Asn-358, Asn-389, Asn-398, Asn-437, Asn-559, Asn-628, Asn-644, Asn-706, Asn-753, Asn-764, Asn-771, and Asn-799 each carry an N-linked (GlcNAc...) asparagine glycan. The region spanning 249-323 (MEGVLNDNGG…ITIDGEYKSN (75 aa)) is the IPT/TIG 1 domain. IPT/TIG domains follow at residues 603 to 680 (PIIE…ISSS) and 704 to 788 (ITNT…IFQF). The chain crosses the membrane as a helical span at residues 804 to 824 (FPNEMYLGFVVFVIFIALISF). Over 825–902 (AAKNQIEKYF…IRRCFKEHTD (78 aa)) the chain is Cytoplasmic.

The protein resides in the cell membrane. Functionally, tgrB1 and tgrC1 are involved in kin discrimination. They play an essential role in aggregation and subsequent development. In Dictyostelium discoideum (Social amoeba), this protein is Tiger protein B1 (tgrB1).